The primary structure comprises 346 residues: UDP-3-O-acylglucosamine N-acyltransferase (346 aa).

H240 (proton acceptor) is an active-site residue.

The protein belongs to the transferase hexapeptide repeat family. LpxD subfamily. In terms of assembly, homotrimer.

The enzyme catalyses a UDP-3-O-[(3R)-3-hydroxyacyl]-alpha-D-glucosamine + a (3R)-hydroxyacyl-[ACP] = a UDP-2-N,3-O-bis[(3R)-3-hydroxyacyl]-alpha-D-glucosamine + holo-[ACP] + H(+). It participates in bacterial outer membrane biogenesis; LPS lipid A biosynthesis. Its function is as follows. Catalyzes the N-acylation of UDP-3-O-acylglucosamine using 3-hydroxyacyl-ACP as the acyl donor. Is involved in the biosynthesis of lipid A, a phosphorylated glycolipid that anchors the lipopolysaccharide to the outer membrane of the cell. The polypeptide is UDP-3-O-acylglucosamine N-acyltransferase (Bacteroides fragilis (strain YCH46)).